A 770-amino-acid polypeptide reads, in one-letter code: NAD-dependent malic enzyme (770 aa).

The malic enzyme stretch occupies residues 1-440 (MNTGDKAKSQ…KLNRFVFRSG (440 aa)). Residue Lys-107 is the Proton acceptor of the active site. A divalent metal cation-binding residues include Glu-149 and Asp-150. NAD(+) contacts are provided by Asp-175 and Asn-300. Positions 441–770 (FIMKPVFAAA…LAVVESSHPV (330 aa)) are phosphate acetyltransferase.

In the N-terminal section; belongs to the malic enzymes family. This sequence in the C-terminal section; belongs to the phosphate acetyltransferase and butyryltransferase family. Homooctamer. It depends on Mg(2+) as a cofactor. Mn(2+) serves as cofactor.

The catalysed reaction is (S)-malate + NAD(+) = pyruvate + CO2 + NADH. Subject to substrate inhibition and shows allosteric regulation by acetyl-CoA. Its function is as follows. Required for symbiotic nitrogen fixation. Plays a key role in the conversion of malate to acetyl-CoA for efficient tricarboxylic acid cycle function in nitrogen-fixating bacteria. In Rhizobium meliloti (strain 1021) (Ensifer meliloti), this protein is NAD-dependent malic enzyme (dme).